We begin with the raw amino-acid sequence, 407 residues long: Arginine biosynthesis bifunctional protein ArgJ (407 aa).

Residues Thr157, Lys183, Thr194, Glu280, Asn402, and Thr407 each contribute to the substrate site. The Nucleophile role is filled by Thr194.

It belongs to the ArgJ family. As to quaternary structure, heterotetramer of two alpha and two beta chains.

The protein localises to the cytoplasm. It carries out the reaction N(2)-acetyl-L-ornithine + L-glutamate = N-acetyl-L-glutamate + L-ornithine. The enzyme catalyses L-glutamate + acetyl-CoA = N-acetyl-L-glutamate + CoA + H(+). It functions in the pathway amino-acid biosynthesis; L-arginine biosynthesis; L-ornithine and N-acetyl-L-glutamate from L-glutamate and N(2)-acetyl-L-ornithine (cyclic): step 1/1. Its pathway is amino-acid biosynthesis; L-arginine biosynthesis; N(2)-acetyl-L-ornithine from L-glutamate: step 1/4. Catalyzes two activities which are involved in the cyclic version of arginine biosynthesis: the synthesis of N-acetylglutamate from glutamate and acetyl-CoA as the acetyl donor, and of ornithine by transacetylation between N(2)-acetylornithine and glutamate. In Bacillus anthracis, this protein is Arginine biosynthesis bifunctional protein ArgJ.